We begin with the raw amino-acid sequence, 227 residues long: Enolase-phosphatase E1 (227 aa).

Residues Asp-11 and Glu-13 each coordinate Mg(2+). Substrate is bound by residues 118-119 (SS) and Lys-161. Asp-186 lines the Mg(2+) pocket.

This sequence belongs to the HAD-like hydrolase superfamily. MasA/MtnC family. As to quaternary structure, monomer. The cofactor is Mg(2+).

It is found in the cytoplasm. Its subcellular location is the nucleus. The enzyme catalyses 5-methylsulfanyl-2,3-dioxopentyl phosphate + H2O = 1,2-dihydroxy-5-(methylsulfanyl)pent-1-en-3-one + phosphate. It functions in the pathway amino-acid biosynthesis; L-methionine biosynthesis via salvage pathway; L-methionine from S-methyl-5-thio-alpha-D-ribose 1-phosphate: step 3/6. The protein operates within amino-acid biosynthesis; L-methionine biosynthesis via salvage pathway; L-methionine from S-methyl-5-thio-alpha-D-ribose 1-phosphate: step 4/6. Bifunctional enzyme that catalyzes the enolization of 2,3-diketo-5-methylthiopentyl-1-phosphate (DK-MTP-1-P) into the intermediate 2-hydroxy-3-keto-5-methylthiopentenyl-1-phosphate (HK-MTPenyl-1-P), which is then dephosphorylated to form the acireductone 1,2-dihydroxy-3-keto-5-methylthiopentene (DHK-MTPene). The protein is Enolase-phosphatase E1 of Saccharomyces cerevisiae (strain ATCC 204508 / S288c) (Baker's yeast).